The sequence spans 419 residues: Peptide chain release factor subunit 1 (419 aa).

It belongs to the eukaryotic release factor 1 family. In terms of assembly, heterodimer of two subunits, one of which binds GTP.

It localises to the cytoplasm. In terms of biological role, directs the termination of nascent peptide synthesis (translation) in response to the termination codons UAA, UAG and UGA. The chain is Peptide chain release factor subunit 1 from Methanococcus vannielii (strain ATCC 35089 / DSM 1224 / JCM 13029 / OCM 148 / SB).